An 899-amino-acid polypeptide reads, in one-letter code: Conserved oligomeric Golgi complex subunit 3 (899 aa).

Belongs to the COG3 family. Component of the conserved oligomeric Golgi complex which is composed of eight different subunits and is required for normal Golgi morphology and localization.

Its subcellular location is the golgi apparatus membrane. Functionally, involved in ER-Golgi transport. This is Conserved oligomeric Golgi complex subunit 3 from Aedes aegypti (Yellowfever mosquito).